Here is a 153-residue protein sequence, read N- to C-terminus: ORM1-like protein 2 (153 aa).

Topologically, residues 1-21 are cytoplasmic; that stretch reads MNVGVAHSEVNPNTRVMNSRG. The next 2 membrane-spanning stretches (helical) occupy residues 22–42 and 43–63; these read IWLA…SIPF and FSIP…MYVF. Over 64–105 the chain is Cytoplasmic; the sequence is LHTVKGTPFETPDQGKARLLTHWEQMDYGLQFTSSRKFLSIS. Residues 106-126 traverse the membrane as a helical segment; the sequence is PIVLYLLASFYTKYDAAHFLI. Residues 127-153 lie on the Extracellular side of the membrane; the sequence is NTASLLSVLLPKLPQFHGVRLFGINKY.

It belongs to the ORM family. Ceramide-sensitive subunit of the serine palmitoyltransferase (SPT) complex, which is also composed of SPTLC1, SPTLC2/3 and SPTSSA/B.

It localises to the endoplasmic reticulum membrane. Plays an essential role in the homeostatic regulation of sphingolipid de novo biosynthesis by modulating the activity of the serine palmitoyltransferase (SPT) in response to ceramide levels. When complexed to SPT, the binding of ceramides to its N-terminus stabilizes a conformation that block SPT substrate entry, hence preventing SPT catalytic activity. Through this mechanism, maintains ceramide levels at sufficient concentrations for the production of complex sphingolipids, but which prevents the accumulation of ceramides to levels that trigger apoptosis. This Bos taurus (Bovine) protein is ORM1-like protein 2 (ORMDL2).